The chain runs to 120 residues: Large ribosomal subunit protein uL18 (120 aa).

The protein belongs to the universal ribosomal protein uL18 family. Part of the 50S ribosomal subunit; part of the 5S rRNA/L5/L18/L25 subcomplex. Contacts the 5S and 23S rRNAs.

This is one of the proteins that bind and probably mediate the attachment of the 5S RNA into the large ribosomal subunit, where it forms part of the central protuberance. The chain is Large ribosomal subunit protein uL18 from Bacillus cereus (strain ATCC 10987 / NRS 248).